Reading from the N-terminus, the 580-residue chain is Long-chain-fatty-acid--AMP ligase FadD28 (580 aa).

The interval 421 to 440 (SERTFGGKIVTPSPGTPEGP) is disordered.

This sequence belongs to the ATP-dependent AMP-binding enzyme family.

It carries out the reaction holo-[mycocerosate synthase] + a long-chain fatty acid + ATP = a long-chain fatty acyl-[mycocerosate synthase] + AMP + diphosphate. The enzyme catalyses a long-chain fatty acid + ATP + H(+) = a long-chain fatty acyl-AMP + diphosphate. It catalyses the reaction holo-[mycocerosate synthase] + a long-chain fatty acyl-AMP = a long-chain fatty acyl-[mycocerosate synthase] + AMP + H(+). Its pathway is lipid metabolism; fatty acid biosynthesis. Functionally, involved in the biosynthesis of phthiocerol dimycocerosate (PDIM), a cell wall-associated lipid found only in pathogenic mycobacteria. Catalyzes the activation of long-chain fatty acids as acyl-adenylates (acyl-AMP), which are then transferred to the multifunctional polyketide synthase Mas for further chain extension. The protein is Long-chain-fatty-acid--AMP ligase FadD28 (fadD28) of Mycobacterium bovis (strain ATCC BAA-935 / AF2122/97).